Here is a 386-residue protein sequence, read N- to C-terminus: Enoyl-[acyl-carrier-protein] reductase 2, mitochondrial (386 aa).

Residues 1-22 (MYSVLKQSIRPRLLATHNQFRT) constitute a mitochondrion transit peptide. The active-site Proton donor is the tyrosine 79. Residues asparagine 172, 199-202 (TSAV), 222-224 (RDR), 296-299 (YGGM), 321-323 (FWV), and lysine 381 contribute to the NADP(+) site.

Belongs to the zinc-containing alcohol dehydrogenase family. Quinone oxidoreductase subfamily. In terms of assembly, homodimer and heterodimer with ETR1.

It is found in the mitochondrion. The catalysed reaction is a 2,3-saturated acyl-[ACP] + NADP(+) = a (2E)-enoyl-[ACP] + NADPH + H(+). Required for respiration and the maintenance of the mitochondrial compartment. Oxidoreductase with a preference for short and medium chain substrates, including trans-2-hexenoyl-CoA (C6), trans-2-decenoyl-CoA (C10), and trans-2-hexadecenoyl-CoA (C16). May play a role in mitochondrial fatty acid synthesis. This chain is Enoyl-[acyl-carrier-protein] reductase 2, mitochondrial (ETR2), found in Candida tropicalis (Yeast).